Reading from the N-terminus, the 373-residue chain is ATP phosphoribosyltransferase regulatory subunit (373 aa).

Belongs to the class-II aminoacyl-tRNA synthetase family. HisZ subfamily. Heteromultimer composed of HisG and HisZ subunits.

It localises to the cytoplasm. Its pathway is amino-acid biosynthesis; L-histidine biosynthesis; L-histidine from 5-phospho-alpha-D-ribose 1-diphosphate: step 1/9. In terms of biological role, required for the first step of histidine biosynthesis. May allow the feedback regulation of ATP phosphoribosyltransferase activity by histidine. The chain is ATP phosphoribosyltransferase regulatory subunit from Chelativorans sp. (strain BNC1).